The chain runs to 374 residues: uncharacterized protein (374 aa).

Positions 197 to 223 (GTTTTTNNNNNNNNNNNNNNNNGTNIT) are disordered. The span at 198 to 223 (TTTTTNNNNNNNNNNNNNNNNGTNIT) shows a compositional bias: low complexity. Residues 302-342 (DEVSDCNDINTNLKKKRKQQEQLQIEKEKKLLTIQQEQTKI) are a coiled coil.

This is an uncharacterized protein from Dictyostelium discoideum (Social amoeba).